Reading from the N-terminus, the 716-residue chain is MFNVTKKSIEWGGETLTLETGKVARQADGSVIATLGETSVMANVTFAKAAKPGQDFFPLTVHYQERYYAAGKVPGGFFKREARPSEKETLTSRLIDRPIRPLFVDGFKNEVLLIVTVLSHDLVNEPDIVAMIAASAALTISGVPFMGPIGAARVGFAGGEYVLNPDVDDMQKLRENPEQRLDLVIAGTKDAVMMVESEAYELSEAEMLGAVKFGHEAMQPVIDMIIDFAEEAAHEPFDFSPPDYAALYAKVKSLGEAQMRAAFAIREKQDRVNAIDAARAAIKAQLSEAELADENLGTAFKKLESSILRGDIINGGARIDGRDTKTVRPIISETSVLPRTHGSALFTRGETQALVVTTLGTGEDEQIIDALHGNSRSNFLLHYNFPPYSVGEVGRFGPPGRREIGHGKLAWRALQAVLPAATDFPYTIRVVSEITESNGSSSMASVCGGSLSMMDAGVPLKAPVAGVAMGLILEDDGKWAVLTDILGDEDHLGDMDFKVAGTENGITSLQMDIKVAGITPEIMEQALAQAKDGRMHILGEMSKALSSANSFSAYAPKIETLTIPTDKIREVIGSGGKVIREIVETSGAKVDINDDGVIKIASNDQAAIKKAYDMIWSIVAEPEEGQIYTGKVVKLVDFGAFVNFFGKRDGLVHVSQIANKRLTHPNEVLKEGQEVKVKLLGFDERGKVRLGMKMVDQETGQEIQPEKKEREEAGEA.

Residues D490 and D496 each coordinate Mg(2+). The KH domain occupies 556–615; it reads PKIETLTIPTDKIREVIGSGGKVIREIVETSGAKVDINDDGVIKIASNDQAAIKKAYDMI. An S1 motif domain is found at 625-693; that stretch reads GQIYTGKVVK…ERGKVRLGMK (69 aa). Residues 695–716 are disordered; that stretch reads VDQETGQEIQPEKKEREEAGEA. The span at 704-716 shows a compositional bias: basic and acidic residues; it reads QPEKKEREEAGEA.

Belongs to the polyribonucleotide nucleotidyltransferase family. The cofactor is Mg(2+).

Its subcellular location is the cytoplasm. It carries out the reaction RNA(n+1) + phosphate = RNA(n) + a ribonucleoside 5'-diphosphate. Involved in mRNA degradation. Catalyzes the phosphorolysis of single-stranded polyribonucleotides processively in the 3'- to 5'-direction. This chain is Polyribonucleotide nucleotidyltransferase, found in Cereibacter sphaeroides (strain KD131 / KCTC 12085) (Rhodobacter sphaeroides).